The primary structure comprises 375 residues: Chanoclavine-I aldehyde reductase ifgG (375 aa).

FMN-binding positions include 31–33 (PTT), Ala-66, Gln-108, and His-176. Residues His-176 and Asn-179 each coordinate substrate. Tyr-181 functions as the Proton donor in the catalytic mechanism. FMN-binding positions include Lys-228, Gly-300, 325–326 (GR), and Arg-326. Residue Tyr-353 coordinates substrate.

Belongs to the NADH:flavin oxidoreductase/NADH oxidase family. The cofactor is FMN.

The catalysed reaction is dihydrochanoclavine-I aldehyde + NADP(+) = chanoclavine-I aldehyde + NADPH + H(+). It functions in the pathway alkaloid biosynthesis; ergot alkaloid biosynthesis. Functionally, chanoclavine-I aldehyde reductase; part of the gene cluster that mediates the biosynthesis of isofumigaclavines, fungal ergot alkaloids. The tryptophan dimethylallyltransferase ifgA catalyzes the first step of ergot alkaloid biosynthesis by condensing dimethylallyl diphosphate (DMAP) and tryptophan to form 4-dimethylallyl-L-tryptophan. The second step is catalyzed by the methyltransferase ifgB that methylates 4-dimethylallyl-L-tryptophan in the presence of S-adenosyl-L-methionine, resulting in the formation of N-methyl-dimethylallyl-L-tryptophan. The catalase ifgD and the FAD-dependent oxidoreductase ifgC then transform N-methyl-dimethylallyl-L-tryptophan to chanoclavine-I which is further oxidized by ifgE in the presence of NAD(+), resulting in the formation of chanoclavine-I aldehyde. The chanoclavine-I aldehyde reductases ifgG and/or fgaOx3 reduce chanoclavine-I aldehyde to dihydrochanoclavine-I aldehyde that spontaneously dehydrates to form 6,8-dimethyl-6,7-didehydroergoline. The festuclavine dehydrogenases ifgF1 and/or ifgF2 then catalyze the reduction of 6,8-dimethyl-6,7-didehydroergoline to form festuclavine. Hydrolysis of festuclavine by a yet undetermined cytochrome P450 monooxygenase (called ifgH) then leads to the formation of isofumigaclavine B which is in turn acetylated by ifgI to isofumigaclavine A. Penicillium roqueforti has interestingly at least two sets of genes for the consumption of chanoclavine-I aldehyde on three different loci, the OYEs ifgG/fgaOx3 and the festuclavine synthase homologs ifgF1/ifgF2. The reason for the duplication of these genes is unclear, probably to ensure the conversion of chanoclavine-I aldehyde by differential gene expression under various environmental conditions. The sequence is that of Chanoclavine-I aldehyde reductase ifgG from Penicillium roqueforti (strain FM164).